We begin with the raw amino-acid sequence, 337 residues long: 1-aminocyclopropane-1-carboxylate deaminase (337 aa).

Residue K50 is modified to N6-(pyridoxal phosphate)lysine.

Belongs to the ACC deaminase/D-cysteine desulfhydrase family. As to quaternary structure, homotrimer. Pyridoxal 5'-phosphate is required as a cofactor.

The enzyme catalyses 1-aminocyclopropane-1-carboxylate + H2O = 2-oxobutanoate + NH4(+). In terms of biological role, catalyzes a cyclopropane ring-opening reaction, the irreversible conversion of 1-aminocyclopropane-1-carboxylate (ACC) to ammonia and alpha-ketobutyrate. Allows growth on ACC as a nitrogen source. This is 1-aminocyclopropane-1-carboxylate deaminase from Mesorhizobium japonicum (strain LMG 29417 / CECT 9101 / MAFF 303099) (Mesorhizobium loti (strain MAFF 303099)).